The primary structure comprises 486 residues: UDP-N-acetylmuramoyl-L-alanyl-D-glutamate--2,6-diaminopimelate ligase (486 aa).

Ser30 contacts UDP-N-acetyl-alpha-D-muramoyl-L-alanyl-D-glutamate. Residue 111 to 117 (GTNGKTT) participates in ATP binding. UDP-N-acetyl-alpha-D-muramoyl-L-alanyl-D-glutamate contacts are provided by residues 153-154 (TT), Ser180, Gln186, and Arg188. Lys220 is modified (N6-carboxylysine). Meso-2,6-diaminopimelate contacts are provided by residues Arg378, 402 to 405 (DNPR), Gly455, and Glu459. Residues 402 to 405 (DNPR) carry the Meso-diaminopimelate recognition motif motif.

Belongs to the MurCDEF family. MurE subfamily. Mg(2+) serves as cofactor. Carboxylation is probably crucial for Mg(2+) binding and, consequently, for the gamma-phosphate positioning of ATP.

Its subcellular location is the cytoplasm. It catalyses the reaction UDP-N-acetyl-alpha-D-muramoyl-L-alanyl-D-glutamate + meso-2,6-diaminopimelate + ATP = UDP-N-acetyl-alpha-D-muramoyl-L-alanyl-gamma-D-glutamyl-meso-2,6-diaminopimelate + ADP + phosphate + H(+). It functions in the pathway cell wall biogenesis; peptidoglycan biosynthesis. In terms of biological role, catalyzes the addition of meso-diaminopimelic acid to the nucleotide precursor UDP-N-acetylmuramoyl-L-alanyl-D-glutamate (UMAG) in the biosynthesis of bacterial cell-wall peptidoglycan. The sequence is that of UDP-N-acetylmuramoyl-L-alanyl-D-glutamate--2,6-diaminopimelate ligase from Parabacteroides distasonis (strain ATCC 8503 / DSM 20701 / CIP 104284 / JCM 5825 / NCTC 11152).